The primary structure comprises 343 residues: Mitochondrial import inner membrane translocase subunit TIM50-A (343 aa).

Residues 1 to 57 (MHKIVWFGTLNKSIGYIGKKKTCLLSPCEKICLNSARKTVQRCDKNYSPPKLRRIKN) lie on the Mitochondrial matrix side of the membrane. The chain crosses the membrane as a helical span at residues 58 to 77 (FYTYSVVLGSLFSIVMWAIY). Topologically, residues 78 to 343 (KLGKPEEDHR…GRSLRGSSIK (266 aa)) are mitochondrial intermembrane. The 144-residue stretch at 135–278 (YIQPPYSLVL…FDLTAFLQLI (144 aa)) folds into the FCP1 homology domain.

The protein belongs to the TIM50 family. In terms of assembly, component of the TIM23 complex at least composed of Tim23, Tim17 (Tim17a1, Tim17a2 or Tim17b1) and a Tim50. In terms of tissue distribution, exclusively expressed in the testis.

The protein resides in the mitochondrion inner membrane. Its function is as follows. Essential component of the TIM23 complex, a complex that mediates the translocation of transit peptide-containing proteins across the mitochondrial inner membrane. The protein is Mitochondrial import inner membrane translocase subunit TIM50-A (ttm3) of Drosophila melanogaster (Fruit fly).